The following is a 426-amino-acid chain: Glutamate-1-semialdehyde 2,1-aminomutase (426 aa).

Lys-265 is modified (N6-(pyridoxal phosphate)lysine).

Belongs to the class-III pyridoxal-phosphate-dependent aminotransferase family. HemL subfamily. As to quaternary structure, homodimer. Pyridoxal 5'-phosphate is required as a cofactor.

It localises to the cytoplasm. It carries out the reaction (S)-4-amino-5-oxopentanoate = 5-aminolevulinate. It participates in porphyrin-containing compound metabolism; protoporphyrin-IX biosynthesis; 5-aminolevulinate from L-glutamyl-tRNA(Glu): step 2/2. The protein is Glutamate-1-semialdehyde 2,1-aminomutase of Hydrogenovibrio crunogenus (strain DSM 25203 / XCL-2) (Thiomicrospira crunogena).